Consider the following 123-residue polypeptide: Small ribosomal subunit protein uS12 (123 aa).

Positions 1-25 (MPTINQLIRKRRKSSLARKKSPALQ) are disordered. A compositionally biased stretch (basic residues) spans 8–21 (IRKRRKSSLARKKS). Aspartate 89 carries the post-translational modification 3-methylthioaspartic acid.

Belongs to the universal ribosomal protein uS12 family. Part of the 30S ribosomal subunit. Contacts proteins S8 and S17. May interact with IF1 in the 30S initiation complex.

In terms of biological role, with S4 and S5 plays an important role in translational accuracy. Functionally, interacts with and stabilizes bases of the 16S rRNA that are involved in tRNA selection in the A site and with the mRNA backbone. Located at the interface of the 30S and 50S subunits, it traverses the body of the 30S subunit contacting proteins on the other side and probably holding the rRNA structure together. The combined cluster of proteins S8, S12 and S17 appears to hold together the shoulder and platform of the 30S subunit. The sequence is that of Small ribosomal subunit protein uS12 from Chlamydia pneumoniae (Chlamydophila pneumoniae).